Reading from the N-terminus, the 135-residue chain is Large ribosomal subunit protein uL18 (135 aa).

Positions 1-23 (MSQTANQKAKRIPLGKDASTKRR) are disordered.

The protein belongs to the universal ribosomal protein uL18 family. Part of the 50S ribosomal subunit; part of the 5S rRNA/L5/L18/L25 subcomplex. Contacts the 5S and 23S rRNAs.

In terms of biological role, this is one of the proteins that bind and probably mediate the attachment of the 5S RNA into the large ribosomal subunit, where it forms part of the central protuberance. The polypeptide is Large ribosomal subunit protein uL18 (Rhodococcus jostii (strain RHA1)).